The sequence spans 486 residues: Cardiolipin synthase A (486 aa).

Helical transmembrane passes span 3–23 (TFYT…IAGV) and 38–58 (MAWL…YLSF). 2 PLD phosphodiesterase domains span residues 219-246 (MDLR…VDPR) and 399-426 (EGGL…DMRS). Catalysis depends on residues His-224, Lys-226, Asp-231, His-404, Lys-406, and Asp-411.

Belongs to the phospholipase D family. Cardiolipin synthase subfamily. ClsA sub-subfamily.

The protein resides in the cell inner membrane. The enzyme catalyses 2 a 1,2-diacyl-sn-glycero-3-phospho-(1'-sn-glycerol) = a cardiolipin + glycerol. Its function is as follows. Catalyzes the reversible phosphatidyl group transfer from one phosphatidylglycerol molecule to another to form cardiolipin (CL) (diphosphatidylglycerol) and glycerol. This chain is Cardiolipin synthase A, found in Yersinia pseudotuberculosis serotype O:1b (strain IP 31758).